Here is a 660-residue protein sequence, read N- to C-terminus: UvrABC system protein C (660 aa).

Residues 16-95 (ESPGVYRFRD…IKQYDPRFNV (80 aa)) enclose the GIY-YIG domain. The UVR domain maps to 208–243 (DAMVRRLEREMAEASAELEFERAARLRDDLAALRRA). Residues 469–501 (GEAGVESAGDPDAPAGPDAPDEPRVGTLVDPTT) form a disordered region. Residues 476–486 (AGDPDAPAGPD) show a composition bias toward low complexity.

It belongs to the UvrC family. In terms of assembly, interacts with UvrB in an incision complex.

The protein resides in the cytoplasm. Functionally, the UvrABC repair system catalyzes the recognition and processing of DNA lesions. UvrC both incises the 5' and 3' sides of the lesion. The N-terminal half is responsible for the 3' incision and the C-terminal half is responsible for the 5' incision. This Salinispora arenicola (strain CNS-205) protein is UvrABC system protein C.